The primary structure comprises 568 residues: COMPASS component cclA (568 aa).

The disordered stretch occupies residues 1-113 (MASDSGTPPP…MRYKLAPPKP (113 aa)). Basic and acidic residues-rich tracts occupy residues 68-77 (KESLKKRESK) and 89-98 (PDPKHREPKQ). The region spanning 160–353 (ADPGFPSSLY…IPIRFKQHIY (194 aa)) is the B30.2/SPRY domain.

The protein belongs to the cclA family. Component of the COMPASS complex.

It localises to the nucleus. The protein resides in the chromosome. The protein localises to the telomere. In terms of biological role, component of the COMPASS (Set1C) complex that specifically mono-, di- and trimethylates histone H3 to form H3K4me1/2/3, which subsequently plays a role in telomere length maintenance and transcription elongation regulation. Controls the production of several secondary metabolites, including colletochlorins, higginsianins and sclerosporide. Plays a key role in mycelial growth, sporulation, spore germination and virulence. The chain is COMPASS component cclA from Colletotrichum higginsianum (strain IMI 349063) (Crucifer anthracnose fungus).